The sequence spans 267 residues: RWD domain-containing protein 3 (267 aa).

The region spanning 7–114 (QELSALAAIF…LWIQQNLRLV (108 aa)) is the RWD domain. 2 interaction with UBE2I/UBC9 regions span residues 13–15 (AAI) and 100–102 (VHE).

In terms of assembly, interacts with UBE2I/UBC9, NFKBIA, HIF1A and NCOA2.

Its subcellular location is the nucleus. The protein localises to the cytoplasm. In terms of biological role, enhancer of SUMO conjugation. Via its interaction with UBE2I/UBC9, increases SUMO conjugation to proteins by promoting the binding of E1 and E2 enzymes, thioester linkage between SUMO and UBE2I/UBC9 and transfer of SUMO to specific target proteins which include HIF1A, PIAS, NFKBIA, NR3C1 and TOP1. Positively regulates the NF-kappa-B signaling pathway by enhancing the sumoylation of NF-kappa-B inhibitor alpha (NFKBIA), promoting its stabilization which consequently leads to an increased inhibition of NF-kappa-B transcriptional activity. Negatively regulates the hypoxia-inducible factor-1 alpha (HIF1A) signaling pathway by increasing the sumoylation of HIF1A, promoting its stabilization, transcriptional activity and the expression of its target gene VEGFA during hypoxia. Has no effect on ubiquitination. This Mus musculus (Mouse) protein is RWD domain-containing protein 3 (Rwdd3).